We begin with the raw amino-acid sequence, 132 residues long: Large ribosomal subunit protein uL14 (132 aa).

This sequence belongs to the universal ribosomal protein uL14 family. As to quaternary structure, part of the 50S ribosomal subunit. Forms a cluster with proteins L3 and L24e, part of which may contact the 16S rRNA in 2 intersubunit bridges.

Its function is as follows. Binds to 23S rRNA. Forms part of two intersubunit bridges in the 70S ribosome. The protein is Large ribosomal subunit protein uL14 of Thermoplasma volcanium (strain ATCC 51530 / DSM 4299 / JCM 9571 / NBRC 15438 / GSS1).